A 451-amino-acid chain; its full sequence is Chromosomal replication initiator protein DnaA (451 aa).

Residues 1–73 (MNAHPKEIWE…IRSLQMVTSQ (73 aa)) are domain I, interacts with DnaA modulators. Residues 73-112 (QKYNVKFLISSELPEEFLTLDTINEQNIKGSIIVSDEMSA) are domain II. The tract at residues 113–329 (MLNPKYTFTS…GALIRIVAFS (217 aa)) is domain III, AAA+ region. Residues G157, G159, K160, and T161 each contribute to the ATP site. The interval 330–451 (SLTNKEISVD…NDLTKRLDQQ (122 aa)) is domain IV, binds dsDNA.

It belongs to the DnaA family. As to quaternary structure, oligomerizes as a right-handed, spiral filament on DNA at oriC.

Its subcellular location is the cytoplasm. Its function is as follows. Plays an essential role in the initiation and regulation of chromosomal replication. ATP-DnaA binds to the origin of replication (oriC) to initiate formation of the DNA replication initiation complex once per cell cycle. Binds the DnaA box (a 9 base pair repeat at the origin) and separates the double-stranded (ds)DNA. Forms a right-handed helical filament on oriC DNA; dsDNA binds to the exterior of the filament while single-stranded (ss)DNA is stabiized in the filament's interior. The ATP-DnaA-oriC complex binds and stabilizes one strand of the AT-rich DNA unwinding element (DUE), permitting loading of DNA polymerase. After initiation quickly degrades to an ADP-DnaA complex that is not apt for DNA replication. Binds acidic phospholipids. The protein is Chromosomal replication initiator protein DnaA of Clostridium kluyveri (strain NBRC 12016).